Here is a 437-residue protein sequence, read N- to C-terminus: Histidinol dehydrogenase (437 aa).

Residues Y133, Q191, and N214 each contribute to the NAD(+) site. Substrate is bound by residues S240, Q262, and H265. Q262 and H265 together coordinate Zn(2+). Residues E329 and H330 each act as proton acceptor in the active site. Residues H330, D363, E417, and H422 each coordinate substrate. D363 lines the Zn(2+) pocket. H422 contacts Zn(2+).

Belongs to the histidinol dehydrogenase family. Homodimer. It depends on Zn(2+) as a cofactor.

It carries out the reaction L-histidinol + 2 NAD(+) + H2O = L-histidine + 2 NADH + 3 H(+). It functions in the pathway amino-acid biosynthesis; L-histidine biosynthesis; L-histidine from 5-phospho-alpha-D-ribose 1-diphosphate: step 9/9. Its function is as follows. Catalyzes the sequential NAD-dependent oxidations of L-histidinol to L-histidinaldehyde and then to L-histidine. This is Histidinol dehydrogenase from Blochmanniella floridana.